Here is a 459-residue protein sequence, read N- to C-terminus: tRNA modification GTPase MnmE (459 aa).

Positions 23, 88, and 127 each coordinate (6S)-5-formyl-5,6,7,8-tetrahydrofolate. In terms of domain architecture, TrmE-type G spans 223–381 (GLNTVIIGKP…LKDTIENMFA (159 aa)). Position 233 (Asn-233) interacts with K(+). Residues 233–238 (NVGKSS), 252–258 (TDIPGTT), and 277–280 (DTAG) contribute to the GTP site. Ser-237 provides a ligand contact to Mg(2+). Thr-252, Ile-254, and Thr-257 together coordinate K(+). Thr-258 lines the Mg(2+) pocket. A (6S)-5-formyl-5,6,7,8-tetrahydrofolate-binding site is contributed by Lys-459.

Belongs to the TRAFAC class TrmE-Era-EngA-EngB-Septin-like GTPase superfamily. TrmE GTPase family. Homodimer. Heterotetramer of two MnmE and two MnmG subunits. Requires K(+) as cofactor.

It is found in the cytoplasm. Exhibits a very high intrinsic GTPase hydrolysis rate. Involved in the addition of a carboxymethylaminomethyl (cmnm) group at the wobble position (U34) of certain tRNAs, forming tRNA-cmnm(5)s(2)U34. The polypeptide is tRNA modification GTPase MnmE (Clostridium acetobutylicum (strain ATCC 824 / DSM 792 / JCM 1419 / IAM 19013 / LMG 5710 / NBRC 13948 / NRRL B-527 / VKM B-1787 / 2291 / W)).